We begin with the raw amino-acid sequence, 544 residues long: Chaperonin GroEL 3 (544 aa).

Residues 30 to 33, lysine 51, 87 to 91, glycine 415, and aspartate 495 contribute to the ATP site; these read TLGP and DGTTT.

The protein belongs to the chaperonin (HSP60) family. In terms of assembly, forms a cylinder of 14 subunits composed of two heptameric rings stacked back-to-back. Interacts with the co-chaperonin GroES.

It is found in the cytoplasm. It catalyses the reaction ATP + H2O + a folded polypeptide = ADP + phosphate + an unfolded polypeptide.. Its function is as follows. Together with its co-chaperonin GroES, plays an essential role in assisting protein folding. The GroEL-GroES system forms a nano-cage that allows encapsulation of the non-native substrate proteins and provides a physical environment optimized to promote and accelerate protein folding. The chain is Chaperonin GroEL 3 from Psychromonas ingrahamii (strain DSM 17664 / CCUG 51855 / 37).